A 586-amino-acid polypeptide reads, in one-letter code: 2-succinyl-5-enolpyruvyl-6-hydroxy-3-cyclohexene-1-carboxylate synthase (586 aa).

The protein belongs to the TPP enzyme family. MenD subfamily. In terms of assembly, homodimer. The cofactor is Mg(2+). It depends on Mn(2+) as a cofactor. Thiamine diphosphate serves as cofactor.

It catalyses the reaction isochorismate + 2-oxoglutarate + H(+) = 5-enolpyruvoyl-6-hydroxy-2-succinyl-cyclohex-3-ene-1-carboxylate + CO2. Its pathway is quinol/quinone metabolism; 1,4-dihydroxy-2-naphthoate biosynthesis; 1,4-dihydroxy-2-naphthoate from chorismate: step 2/7. It functions in the pathway quinol/quinone metabolism; menaquinone biosynthesis. In terms of biological role, catalyzes the thiamine diphosphate-dependent decarboxylation of 2-oxoglutarate and the subsequent addition of the resulting succinic semialdehyde-thiamine pyrophosphate anion to isochorismate to yield 2-succinyl-5-enolpyruvyl-6-hydroxy-3-cyclohexene-1-carboxylate (SEPHCHC). The polypeptide is 2-succinyl-5-enolpyruvyl-6-hydroxy-3-cyclohexene-1-carboxylate synthase (Geobacillus thermodenitrificans (strain NG80-2)).